Reading from the N-terminus, the 248-residue chain is Ribosomal RNA small subunit methyltransferase J (248 aa).

Residues 98–99 (RD), 114–115 (ER), 150–151 (SS), and Asp168 contribute to the S-adenosyl-L-methionine site.

Belongs to the methyltransferase superfamily. RsmJ family.

It localises to the cytoplasm. The catalysed reaction is guanosine(1516) in 16S rRNA + S-adenosyl-L-methionine = N(2)-methylguanosine(1516) in 16S rRNA + S-adenosyl-L-homocysteine + H(+). In terms of biological role, specifically methylates the guanosine in position 1516 of 16S rRNA. This Shewanella amazonensis (strain ATCC BAA-1098 / SB2B) protein is Ribosomal RNA small subunit methyltransferase J.